Here is a 185-residue protein sequence, read N- to C-terminus: Ribosome-recycling factor (185 aa).

It belongs to the RRF family.

It localises to the cytoplasm. Functionally, responsible for the release of ribosomes from messenger RNA at the termination of protein biosynthesis. May increase the efficiency of translation by recycling ribosomes from one round of translation to another. The protein is Ribosome-recycling factor of Idiomarina loihiensis (strain ATCC BAA-735 / DSM 15497 / L2-TR).